Reading from the N-terminus, the 229-residue chain is Ribonuclease 3 (229 aa).

In terms of domain architecture, RNase III spans 2 to 130 (FEKLQDVLCY…ILGAIFLDGG (129 aa)). E43 contributes to the Mg(2+) binding site. Residue D47 is part of the active site. 2 residues coordinate Mg(2+): D116 and E119. E119 is an active-site residue. Residues 157-226 (DAKSTLQELT…AGLALELLEG (70 aa)) form the DRBM domain.

This sequence belongs to the ribonuclease III family. In terms of assembly, homodimer. Requires Mg(2+) as cofactor.

It localises to the cytoplasm. The enzyme catalyses Endonucleolytic cleavage to 5'-phosphomonoester.. Its function is as follows. Digests double-stranded RNA. Involved in the processing of primary rRNA transcript to yield the immediate precursors to the large and small rRNAs (23S and 16S). Processes some mRNAs, and tRNAs when they are encoded in the rRNA operon. Processes pre-crRNA and tracrRNA of type II CRISPR loci if present in the organism. The chain is Ribonuclease 3 from Oleidesulfovibrio alaskensis (strain ATCC BAA-1058 / DSM 17464 / G20) (Desulfovibrio alaskensis).